Reading from the N-terminus, the 808-residue chain is Sucrose synthase 2 (808 aa).

Ser10 carries the post-translational modification Phosphoserine; by CPK. The tract at residues Met272–Thr749 is GT-B glycosyltransferase.

This sequence belongs to the glycosyltransferase 1 family. Plant sucrose synthase subfamily. In terms of assembly, homotetramer or heterotetramer with SUS1. Phosphorylated at Ser-10 by CPK23 in developing seeds. As to expression, predominantly expressed in the leaf tissues. Expressed in seeds, and at lower levels in roots. Expressed in leaf mesophyll and phloem (at protein level).

It catalyses the reaction an NDP-alpha-D-glucose + D-fructose = a ribonucleoside 5'-diphosphate + sucrose + H(+). With respect to regulation, activated by phosphorylation at Ser-10 by CPK23. Its function is as follows. Sucrose-cleaving enzyme that provides UDP-glucose and fructose for various metabolic pathways. Functions in developing seeds by supplying substrates for the biosynthesis of storage products. This is Sucrose synthase 2 (SUS2) from Oryza sativa subsp. japonica (Rice).